Consider the following 203-residue polypeptide: Ras-related protein Rab5A (203 aa).

GTP is bound at residue 18-26; the sequence is GDVGTGKSS. Positions 40–48 match the Effector region motif; sequence QESTIGAAF. GTP is bound by residues 66-70, 124-127, and 154-155; these read DTAGQ, NKAD, and SA. Residues Cys-201 and Cys-202 are each lipidated (S-geranylgeranyl cysteine).

The protein belongs to the small GTPase superfamily. Rab family. In terms of assembly, interacts with VPS9A. Interacts with NSF and RBP-L. In terms of tissue distribution, highly expressed in roots. Expressed at low levels in shoots, flowers and grains.

Its subcellular location is the prevacuolar compartment membrane. It localises to the golgi apparatus membrane. The protein resides in the cell membrane. It is found in the protein storage vacuole membrane. Its function is as follows. Plays an important role in intracellular trafficking of seed storage proteins to the protein storage vacuoles (PSVs). Participates in the transport of the proglutelins from the Golgi apparatus to the PSVs in endosperm. Functions cooperatively with VPS9A to regulate post-Golgi dense vesicle-mediated transport of storage proteins to the type II protein bodies (PBII) protein storage vacuoles in developing endosperm. Involved in the maintenance of the general structural organization of the endomembrane system in developing endosperm. Binds GTP in vitro. Forms a quaternary complex with the two glutelin zipcode RNA-binding proteins RBP-L and RBP-P, and the membrane trafficking factor NSF. This quaternay complex carries glutelin mRNAs for active transport on endosomes to the cortical endoplasmic reticulum membrane, and enables endosome-mediated glutelin mRNA transport in endosperm cells. The polypeptide is Ras-related protein Rab5A (Oryza sativa subsp. japonica (Rice)).